The primary structure comprises 386 residues: Succinate--CoA ligase [ADP-forming] subunit beta (386 aa).

The region spanning 9–244 (KQILKKYGAV…LNEEDPTEID (236 aa)) is the ATP-grasp domain. ATP is bound by residues Lys46, 53 to 55 (GRG), Glu99, Ser102, and Glu107. Mg(2+)-binding residues include Asn199 and Asp213. Substrate is bound by residues Asn264 and 321-323 (GIM).

Belongs to the succinate/malate CoA ligase beta subunit family. As to quaternary structure, heterotetramer of two alpha and two beta subunits. Mg(2+) serves as cofactor.

The enzyme catalyses succinate + ATP + CoA = succinyl-CoA + ADP + phosphate. It carries out the reaction GTP + succinate + CoA = succinyl-CoA + GDP + phosphate. It participates in carbohydrate metabolism; tricarboxylic acid cycle; succinate from succinyl-CoA (ligase route): step 1/1. Functionally, succinyl-CoA synthetase functions in the citric acid cycle (TCA), coupling the hydrolysis of succinyl-CoA to the synthesis of either ATP or GTP and thus represents the only step of substrate-level phosphorylation in the TCA. The beta subunit provides nucleotide specificity of the enzyme and binds the substrate succinate, while the binding sites for coenzyme A and phosphate are found in the alpha subunit. This chain is Succinate--CoA ligase [ADP-forming] subunit beta, found in Pelagibacter ubique (strain HTCC1062).